Here is a 263-residue protein sequence, read N- to C-terminus: MPVVTVYRHGGKGGVAPMNSSHIRTPRGDVQGWSPGAVRRNTQFLMCVREDKLTGAGFALTLTVRDCPATAQEWHKMRRAWEKRMLRAGMIRLHWVTEWQRRGVPHLHCAIWFSGTVYDFSLCIDAWLAVASSCGAALRGQHGRIIDGVVGWFQYVSKHAARGVRHYQRCSDNLPEAWKALTGRVWGKVGDWPLFSELRIDLQDHRQDGDGGFFAYRRLVRSWRVSDARRAGDRYRLRSARRMLTCSDTSRSRAIGFMEWGSL.

The sequence is that of Putative replication protein PDa0002 from Xylella fastidiosa (strain Temecula1 / ATCC 700964).